The chain runs to 718 residues: 1-deoxy-D-xylulose-5-phosphate synthase 1, chloroplastic (718 aa).

A chloroplast-targeting transit peptide spans 1–55; it reads MAFCALSFPAHISRATTPAPSDLQKSSSFSSRFYWGADLLRPSQYKVRKIQSGVY. Residues histidine 143 and 184-186 contribute to the thiamine diphosphate site; that span reads GHS. Aspartate 215 is a binding site for Mg(2+). Residues 216–217, asparagine 244, tyrosine 365, and glutamate 447 each bind thiamine diphosphate; that span reads GA. Position 244 (asparagine 244) interacts with Mg(2+).

Belongs to the transketolase family. DXPS subfamily. As to quaternary structure, homodimer. Requires Mg(2+) as cofactor. The cofactor is thiamine diphosphate. As to expression, expressed in trichomes, leaves, flowers, roots and stems.

Its subcellular location is the plastid. It localises to the chloroplast. It catalyses the reaction D-glyceraldehyde 3-phosphate + pyruvate + H(+) = 1-deoxy-D-xylulose 5-phosphate + CO2. It participates in metabolic intermediate biosynthesis; 1-deoxy-D-xylulose 5-phosphate biosynthesis; 1-deoxy-D-xylulose 5-phosphate from D-glyceraldehyde 3-phosphate and pyruvate: step 1/1. Its function is as follows. Catalyzes the acyloin condensation reaction between C atoms 2 and 3 of pyruvate and glyceraldehyde 3-phosphate to yield 1-deoxy-D-xylulose-5-phosphate (DXP). In Cannabis sativa (Hemp), this protein is 1-deoxy-D-xylulose-5-phosphate synthase 1, chloroplastic.